Consider the following 576-residue polypeptide: M-phase inducer phosphatase 2 (576 aa).

A Phosphoserine modification is found at S42. Residues 90-105 (RRTSECSLSSESSESS) are compositionally biased toward low complexity. A disordered region spans residues 90–119 (RRTSECSLSSESSESSDAGLCMDSPSPVDP). Phosphoserine; by MELK is present on S167. The residue at position 248 (S248) is a Phosphoserine. S321 bears the Phosphoserine; by MELK and MAPK14 mark. The tract at residues 338–358 (QDRDVPVQSKRRKSVTPLEEQ) is disordered. Residue S351 is modified to Phosphoserine; by AURKA. S372 is modified (phosphoserine; by BRSK1 and MAPK14). Residues 427–534 (IVEKFVIVDC…FFPQHPNFCE (108 aa)) form the Rhodanese domain. Residue C483 is part of the active site. Phosphoserine is present on S559.

This sequence belongs to the MPI phosphatase family. In terms of assembly, interacts with MAPK14 and 14-3-3 proteins. Phosphorylated by BRSK1 in vitro. Phosphorylated by CHEK1, which inhibits the activity of this protein. Phosphorylation at Ser-351 by AURKA might locally participate in the control of the onset of mitosis. Phosphorylation by MELK at Ser-167 promotes localization to the centrosome and the spindle poles during mitosis. Phosphorylation at Ser-321 and Ser-372 by MAPK14 is required for binding to 14-3-3 proteins. Expressed predominantly in spleen, lung, heart, brain, intestine, and muscle.

The protein resides in the cytoplasm. The protein localises to the cytoskeleton. It localises to the microtubule organizing center. Its subcellular location is the centrosome. It is found in the spindle pole. It catalyses the reaction O-phospho-L-tyrosyl-[protein] + H2O = L-tyrosyl-[protein] + phosphate. Its activity is regulated as follows. Stimulated by B-type cyclins. Functionally, tyrosine protein phosphatase which functions as a dosage-dependent inducer of mitotic progression. Directly dephosphorylates CDK1 and stimulates its kinase activity. Required for G2/M phases of the cell cycle progression and abscission during cytokinesis in a ECT2-dependent manner. The three isoforms seem to have a different level of activity. The protein is M-phase inducer phosphatase 2 (Cdc25b) of Mus musculus (Mouse).